The chain runs to 146 residues: Deoxyuridine 5'-triphosphate nucleotidohydrolase (146 aa).

Residues 60–62 (RSG), N73, and 77–79 (VID) each bind substrate.

It belongs to the dUTPase family. The cofactor is Mg(2+).

The enzyme catalyses dUTP + H2O = dUMP + diphosphate + H(+). It functions in the pathway pyrimidine metabolism; dUMP biosynthesis; dUMP from dCTP (dUTP route): step 2/2. Functionally, this enzyme is involved in nucleotide metabolism: it produces dUMP, the immediate precursor of thymidine nucleotides and it decreases the intracellular concentration of dUTP so that uracil cannot be incorporated into DNA. The polypeptide is Deoxyuridine 5'-triphosphate nucleotidohydrolase (Tropheryma whipplei (strain TW08/27) (Whipple's bacillus)).